Here is an 89-residue protein sequence, read N- to C-terminus: NADH-ubiquinone oxidoreductase chain 4L (89 aa).

Helical transmembrane passes span 1–21 (MNITLILFLIGILGFVLNRKN), 22–42 (IILMLISIEIMLLAITFLILV), and 57–77 (IYIIVVAGAESAIGLAILVAF).

The protein belongs to the complex I subunit 4L family.

The protein localises to the mitochondrion membrane. The catalysed reaction is a ubiquinone + NADH + 5 H(+)(in) = a ubiquinol + NAD(+) + 4 H(+)(out). Its function is as follows. Core subunit of the mitochondrial membrane respiratory chain NADH dehydrogenase (Complex I) that is believed to belong to the minimal assembly required for catalysis. Complex I functions in the transfer of electrons from NADH to the respiratory chain. The immediate electron acceptor for the enzyme is believed to be ubiquinone. The sequence is that of NADH-ubiquinone oxidoreductase chain 4L (ndh-4L) from Neurospora crassa (strain ATCC 24698 / 74-OR23-1A / CBS 708.71 / DSM 1257 / FGSC 987).